Here is a 370-residue protein sequence, read N- to C-terminus: 3-dehydroquinate synthase (370 aa).

NAD(+)-binding positions include 112-116, 136-137, K149, K158, and 176-179; these read GVVGD, TS, and TLRT. Zn(2+)-binding residues include E191, H254, and H276.

This sequence belongs to the sugar phosphate cyclases superfamily. Dehydroquinate synthase family. The cofactor is Co(2+). Zn(2+) is required as a cofactor. NAD(+) serves as cofactor.

It localises to the cytoplasm. The catalysed reaction is 7-phospho-2-dehydro-3-deoxy-D-arabino-heptonate = 3-dehydroquinate + phosphate. It participates in metabolic intermediate biosynthesis; chorismate biosynthesis; chorismate from D-erythrose 4-phosphate and phosphoenolpyruvate: step 2/7. In terms of biological role, catalyzes the conversion of 3-deoxy-D-arabino-heptulosonate 7-phosphate (DAHP) to dehydroquinate (DHQ). The sequence is that of 3-dehydroquinate synthase from Xanthomonas oryzae pv. oryzae (strain MAFF 311018).